The primary structure comprises 160 residues: MRHNKKFNHLGRKAAHRKAMLSNMAASLILHKRIFTTVAKAKALRIYVEPLLTKTKEDTTHSRRIAFSYLQNKYALKELFGDVAAKIADRPGGYTRILKTGYRLGDNAAMCFIELVDYNENMLGEAAKKATKTRRSRKRKSADVVVEAAPAEETPKAAEE.

The tract at residues 128–160 (KKATKTRRSRKRKSADVVVEAAPAEETPKAAEE) is disordered. Over residues 129 to 140 (KATKTRRSRKRK) the composition is skewed to basic residues.

This sequence belongs to the bacterial ribosomal protein bL17 family. In terms of assembly, part of the 50S ribosomal subunit. Contacts protein L32.

The sequence is that of Large ribosomal subunit protein bL17 from Porphyromonas gingivalis (strain ATCC 33277 / DSM 20709 / CIP 103683 / JCM 12257 / NCTC 11834 / 2561).